The sequence spans 110 residues: Body wall hemoglobin (110 aa).

The Globin domain maps to 2-110 (VNWAAVVDAF…GAVDAIISHF (109 aa)). His-70 lines the heme pocket.

Belongs to the globin family. Homotetramer.

The protein is Body wall hemoglobin of Cerebratulus lacteus (Milky ribbon worm).